A 550-amino-acid chain; its full sequence is Hydroxylamine reductase (550 aa).

[2Fe-2S] cluster-binding residues include cysteine 3, cysteine 6, cysteine 18, and cysteine 25. 8 residues coordinate hybrid [4Fe-2O-2S] cluster: histidine 249, glutamate 273, cysteine 317, cysteine 405, cysteine 433, cysteine 458, glutamate 492, and lysine 494. Cysteine 405 is subject to Cysteine persulfide.

It belongs to the HCP family. [2Fe-2S] cluster is required as a cofactor. Hybrid [4Fe-2O-2S] cluster serves as cofactor.

The protein resides in the cytoplasm. The enzyme catalyses A + NH4(+) + H2O = hydroxylamine + AH2 + H(+). Its function is as follows. Catalyzes the reduction of hydroxylamine to form NH(3) and H(2)O. The protein is Hydroxylamine reductase of Yersinia pseudotuberculosis serotype IB (strain PB1/+).